We begin with the raw amino-acid sequence, 434 residues long: D-amino acid dehydrogenase (434 aa).

3–17 (VIVLGSGVIGTTTAY) serves as a coordination point for FAD.

This sequence belongs to the DadA oxidoreductase family. FAD is required as a cofactor.

It catalyses the reaction a D-alpha-amino acid + A + H2O = a 2-oxocarboxylate + AH2 + NH4(+). Oxidative deamination of D-amino acids. In Bordetella bronchiseptica (strain ATCC BAA-588 / NCTC 13252 / RB50) (Alcaligenes bronchisepticus), this protein is D-amino acid dehydrogenase.